Consider the following 852-residue polypeptide: DNA mismatch repair protein MutS (852 aa).

An ATP-binding site is contributed by Gly-602–Ser-609.

Belongs to the DNA mismatch repair MutS family.

In terms of biological role, this protein is involved in the repair of mismatches in DNA. It is possible that it carries out the mismatch recognition step. This protein has a weak ATPase activity. This chain is DNA mismatch repair protein MutS, found in Streptococcus thermophilus (strain ATCC BAA-491 / LMD-9).